The sequence spans 1561 residues: Formin-E (1561 aa).

The span at 1–28 shows a compositional bias: low complexity; it reads MDNHSSSSNPSSLSSSSSSSSSSSSFLS. Disordered stretches follow at residues 1-63, 77-187, 211-279, and 305-365; these read MDNH…EEKP, EEEE…GKLS, PIIV…SSED, and ILRS…NLNY. Residues 29-51 are compositionally biased toward basic and acidic residues; the sequence is DHVKKEEQNGLDTIKEEIENKIE. The stretch at 32 to 85 forms a coiled coil; that stretch reads KKEEQNGLDTIKEEIENKIENEEEEEKIEEKPIEKVEEEKIIVQKEEEEKIEEE. Acidic residues predominate over residues 80–89; the sequence is EKIEEEPIEK. Over residues 103–120 the composition is skewed to polar residues; that stretch reads DNINTTVEAKTLETSTEP. A coiled-coil region spans residues 158-208; the sequence is EQQEQQEKQKEETKPSIREEVKEKIKGKLSEIKEEIKDIKEEIKHVIREEV. The span at 162–187 shows a compositional bias: basic and acidic residues; the sequence is QQEKQKEETKPSIREEVKEKIKGKLS. Pro residues predominate over residues 220-229; the sequence is SPPPPPPPPS. The span at 230–258 shows a compositional bias: low complexity; sequence ITVQSSSPVSSQISSPVSSPVSSPKPSVT. The segment covering 305 to 320 has biased composition (polar residues); it reads ILRSKSSPNPGANNPN. Over residues 326–365 the composition is skewed to low complexity; it reads NNSSSSSSSNNNSDNNNNSDNNSNNNNINNNNSSSNNLNY. Residues 379–427 form a Phorbol-ester/DAG-type zinc finger; sequence YHDFKIHRGTSSCVYCGENTRLWSTSYKCFFCGVVCHKKCLDSMNTIPC. Positions 465-534 are enriched in low complexity; it reads PSSITNSSSK…TSISSPPIAS (70 aa). The disordered stretch occupies residues 465 to 549; sequence PSSITNSSSK…PLLQQQQQQQ (85 aa). Residues 541-573 adopt a coiled-coil conformation; that stretch reads LLQQQQQQQQQQQQQQQQQQQQQQQQQQISTTQ. In terms of domain architecture, GBD/FH3 spans 581 to 929; sequence SEKPDDDMIN…QISLHKGGFE (349 aa). The stretch at 952–989 forms a coiled coil; sequence LNRKLGELEKQNIDKAMKIQEQDINIKSLLDLLKQLKD. Disordered stretches follow at residues 1009 to 1092, 1466 to 1508, and 1526 to 1561; these read MEPP…VPKP, EEKR…SDED, and RQAKGRRRTTHQIATSKMISNNLDPSKILPTSPNKN. Over residues 1017-1033 the composition is skewed to low complexity; that stretch reads SVKSPDDPNNAAPIVVA. The region spanning 1019 to 1081 is the FH1 domain; sequence KSPDDPNNAA…LGAKKPPAGV (63 aa). The span at 1034-1070 shows a compositional bias: pro residues; it reads PIPPPPPPISGAPPPPPPPPPPMKGGAGPPPPPPPPG. Residues 1071–1081 show a composition bias toward low complexity; that stretch reads KLGAKKPPAGV. One can recognise an FH2 domain in the interval 1086 to 1475; it reads PPKVPKPSHP…EEKRLQQKQQ (390 aa). Residues 1398-1491 are a coiled coil; the sequence is LATASTEVEK…RKLTTSNESA (94 aa). Basic and acidic residues predominate over residues 1466-1481; that stretch reads EEKRLQQKQQRQERAV. Polar residues-rich tracts occupy residues 1484-1498 and 1536-1561; these read LTTSNESASASPNHA and HQIATSKMISNNLDPSKILPTSPNKN. Positions 1488-1518 constitute a DAD domain; sequence NESASASPNHAKSTDDKSDEDDDIVNDLLMA.

This sequence belongs to the formin homology family. Diaphanous subfamily. Interacts (via GBD/FH3 domain) with activated Rho-GTPases.

Formins play an important role in the nucleation of actin and the formation of linear actin filaments. This is Formin-E (forE) from Dictyostelium discoideum (Social amoeba).